The primary structure comprises 176 residues: Large ribosomal subunit protein uL10 (176 aa).

This sequence belongs to the universal ribosomal protein uL10 family. In terms of assembly, part of the ribosomal stalk of the 50S ribosomal subunit. The N-terminus interacts with L11 and the large rRNA to form the base of the stalk. The C-terminus forms an elongated spine to which L12 dimers bind in a sequential fashion forming a multimeric L10(L12)X complex.

Its function is as follows. Forms part of the ribosomal stalk, playing a central role in the interaction of the ribosome with GTP-bound translation factors. In Streptomyces coelicolor (strain ATCC BAA-471 / A3(2) / M145), this protein is Large ribosomal subunit protein uL10 (rplJ).